A 284-amino-acid polypeptide reads, in one-letter code: Elongation factor Ts (284 aa).

Residues 80-83 form an involved in Mg(2+) ion dislocation from EF-Tu region; sequence TDFV.

Belongs to the EF-Ts family.

Its subcellular location is the cytoplasm. Functionally, associates with the EF-Tu.GDP complex and induces the exchange of GDP to GTP. It remains bound to the aminoacyl-tRNA.EF-Tu.GTP complex up to the GTP hydrolysis stage on the ribosome. This chain is Elongation factor Ts, found in Neisseria meningitidis serogroup C (strain 053442).